The sequence spans 217 residues: Uridylate kinase (217 aa).

6 to 10 contributes to the ATP binding site; the sequence is KISGR. Gly-38 lines the UMP pocket. Positions 39 and 43 each coordinate ATP. Residues Asp-60 and 107–113 contribute to the UMP site; that span reads FQPGQST. 3 residues coordinate ATP: Asn-134, Tyr-139, and Asp-142.

This sequence belongs to the UMP kinase family. As to quaternary structure, homohexamer.

It localises to the cytoplasm. The enzyme catalyses UMP + ATP = UDP + ADP. It functions in the pathway pyrimidine metabolism; CTP biosynthesis via de novo pathway; UDP from UMP (UMPK route): step 1/1. Inhibited by UTP. In terms of biological role, catalyzes the reversible phosphorylation of UMP to UDP. In Pyrobaculum arsenaticum (strain DSM 13514 / JCM 11321 / PZ6), this protein is Uridylate kinase.